Reading from the N-terminus, the 292-residue chain is Cyclin-dependent-like kinase 5 (292 aa).

The region spanning 4-286 (YDKMEKIGEG…ADAALRHAYF (283 aa)) is the Protein kinase domain. ATP contacts are provided by residues 10–18 (IGEGTYGTV) and Lys-33. Asp-126 (proton acceptor) is an active-site residue. Asn-131 and Asp-144 together coordinate Mg(2+).

This sequence belongs to the protein kinase superfamily. CMGC Ser/Thr protein kinase family. CDC2/CDKX subfamily. As to quaternary structure, heterodimer composed of a catalytic subunit cdk-5 and a regulatory subunit cdka-1. Interaction with cdka-1 is required for cdk-5 activation. Mg(2+) is required as a cofactor.

Its subcellular location is the cytoplasm. The protein localises to the cell projection. The protein resides in the dendrite. It carries out the reaction L-seryl-[protein] + ATP = O-phospho-L-seryl-[protein] + ADP + H(+). It catalyses the reaction L-threonyl-[protein] + ATP = O-phospho-L-threonyl-[protein] + ADP + H(+). In terms of biological role, proline-directed serine/threonine-protein kinase which, in several motor neurons, promotes the polarized trafficking of synaptic vesicles and dense-core vesicles (DCV). In the ventral nerve cord, phosphorylates lin-10 and thereby prevents lin-10-mediated anterograde trafficking of the glutamate receptor glr-1. Involved in the inhibition of glr-1 trafficking in hypoxic conditions. In DA motor neurons but not in DB motor neurons, regulates axonal transport of synaptic vesicle precursors by inhibiting dynein-mediated retrograde transport. Regulates the trafficking of dense-core vesicles in DA and DB motor neurons by promoting anterograde trafficking to the axon and preventing dynein-dependent trafficking to the dendrite. May regulate these processes in association with cdka-1/p35. Activity may be regulated by cyy-1. Involved in synapse formation during DD motor neuron remodeling by regulating transport of disassembled synaptic material to the new synaptic sites probably by activating the motor protein unc-104/kinesin-3. Regulates microtubule polarity in the dendrite of DB motor neurons. May also play a role in GABAergic synaptic vesicle localization in the ventral nerve cord. This Caenorhabditis elegans protein is Cyclin-dependent-like kinase 5.